Consider the following 281-residue polypeptide: uncharacterized protein (281 aa).

It localises to the plastid. Its subcellular location is the chloroplast. This is an uncharacterized protein from Euglena gracilis.